Reading from the N-terminus, the 86-residue chain is Cytochrome c-555 (86 aa).

Heme c contacts are provided by cysteine 14, cysteine 17, histidine 18, and methionine 60.

Binds 1 heme c group covalently per subunit.

Its function is as follows. This basic c-type monoheme cytochrome has been found exclusively in the green photosynthetic bacteria, although its role in bacterial photosynthesis is not established. It has an unusually low redox potential compared with mitochondrial cytochrome c. It is reactive with cytochrome c oxidases but not with reductases. This chain is Cytochrome c-555, found in Chlorobaculum thiosulfatiphilum (Chlorobium limicola f.sp. thiosulfatophilum).